Reading from the N-terminus, the 85-residue chain is uncharacterized protein (85 aa).

It belongs to the ycf76 family.

It localises to the plastid. The protein resides in the chloroplast. This is an uncharacterized protein from Oryza sativa subsp. japonica (Rice).